The following is a 69-amino-acid chain: uncharacterized protein (69 aa).

Residues 5 to 60 (IREHRKELGLTQEELAERVGVTRQTIIALEKGRYSPSLILAHRIARALGREHIEDI) form the HTH cro/C1-type domain. Positions 16 to 35 (QEELAERVGVTRQTIIALEK) form a DNA-binding region, H-T-H motif.

This is an uncharacterized protein from Methanothermobacter thermautotrophicus (strain ATCC 29096 / DSM 1053 / JCM 10044 / NBRC 100330 / Delta H) (Methanobacterium thermoautotrophicum).